Reading from the N-terminus, the 399-residue chain is Phosphatidate cytidylyltransferase 5, chloroplastic (399 aa).

Residues 1–26 constitute a chloroplast transit peptide; the sequence is MAPFVEVCRYKPLPLSLSSLCTCPCR. A run of 6 helical transmembrane segments spans residues 123–143, 187–207, 217–237, 266–286, 309–329, and 333–353; these read VGGIVLAGGWVFTVAVAAAVL, FGHIDISITSAAFVVAMALLL, LSSTMFGLFYCGYLPCFWVKL, VGLVAILISFCGIIASDTFAF, AFAGLVGCISITILLSKSLSW, and LVSTIAFGVLNFFGSVFGDLT.

It belongs to the CDS family. Mg(2+) serves as cofactor.

It localises to the plastid. Its subcellular location is the chloroplast membrane. The catalysed reaction is a 1,2-diacyl-sn-glycero-3-phosphate + CTP + H(+) = a CDP-1,2-diacyl-sn-glycerol + diphosphate. It participates in phospholipid metabolism; CDP-diacylglycerol biosynthesis; CDP-diacylglycerol from sn-glycerol 3-phosphate: step 3/3. With respect to regulation, highest activities is obtained at about 30 mM CTP and 2 mM phosphatidic acid (PA). Its function is as follows. May be involved in the synthesis of minor phospholipids and in modulation of IP3-mediated signal transduction. Promotes the biosynthesis of plastidial phosphatidylglycerol (PG) which is required for structure and function of thylakoid membranes and, hence, for photoautotrophic growth. The sequence is that of Phosphatidate cytidylyltransferase 5, chloroplastic from Arabidopsis thaliana (Mouse-ear cress).